The sequence spans 154 residues: Myoglobin (154 aa).

The Globin domain occupies 2 to 148 (VLTDAEWHLV…FRKDIAAKYK (147 aa)). Histidine 65 lines the nitrite pocket. Position 65 (histidine 65) interacts with O2. Threonine 68 is modified (phosphothreonine). Histidine 94 contributes to the heme b binding site.

The protein belongs to the globin family. As to quaternary structure, monomeric.

The protein resides in the cytoplasm. It localises to the sarcoplasm. The enzyme catalyses Fe(III)-heme b-[protein] + nitric oxide + H2O = Fe(II)-heme b-[protein] + nitrite + 2 H(+). The catalysed reaction is H2O2 + AH2 = A + 2 H2O. Monomeric heme protein which primary function is to store oxygen and facilitate its diffusion within muscle tissues. Reversibly binds oxygen through a pentacoordinated heme iron and enables its timely and efficient release as needed during periods of heightened demand. Depending on the oxidative conditions of tissues and cells, and in addition to its ability to bind oxygen, it also has a nitrite reductase activity whereby it regulates the production of bioactive nitric oxide. Under stress conditions, like hypoxia and anoxia, it also protects cells against reactive oxygen species thanks to its pseudoperoxidase activity. The chain is Myoglobin (MB) from Balaenoptera physalus (Fin whale).